A 104-amino-acid polypeptide reads, in one-letter code: Large ribosomal subunit protein uL23 (104 aa).

The protein belongs to the universal ribosomal protein uL23 family. As to quaternary structure, part of the 50S ribosomal subunit. Contacts protein L29, and trigger factor when it is bound to the ribosome.

One of the early assembly proteins it binds 23S rRNA. One of the proteins that surrounds the polypeptide exit tunnel on the outside of the ribosome. Forms the main docking site for trigger factor binding to the ribosome. This is Large ribosomal subunit protein uL23 from Burkholderia multivorans (strain ATCC 17616 / 249).